The primary structure comprises 215 residues: Pyrrolidone-carboxylate peptidase (215 aa).

Active-site residues include Glu-80, Cys-143, and His-167.

This sequence belongs to the peptidase C15 family. Homotetramer.

The protein resides in the cytoplasm. It carries out the reaction Release of an N-terminal pyroglutamyl group from a polypeptide, the second amino acid generally not being Pro.. Removes 5-oxoproline from various penultimate amino acid residues except L-proline. This Bacillus cytotoxicus (strain DSM 22905 / CIP 110041 / 391-98 / NVH 391-98) protein is Pyrrolidone-carboxylate peptidase.